A 334-amino-acid chain; its full sequence is MMTNLNVRTIKGCFPGSLPDALNDMSVINHILSLTGRFDEGQAALASTVNVVYVGTAVYDIPRYREEYTKNFIARGCGISEVCVAEARSTGATPCAAATMVTPDQLQHLAEAHIILLPEVTPFSLYDAGRKRASMRVSGQVAARGVVLVGGGCCFRAEHSDSANPKTCAQYMLSRENEVDSGRPVEMEEGGAKWEYLCVHGLSVLPGIFCPQHSSRDATGLLLNESFSKMLKRHPTERGIGVDCRAVLLLMGDGRYQVLTIANREGRTASVKDINIQIKDVVEGNVQTTTIQQQGSVEELLRKPCGPVVRDPFEAYYAMANPTALTEKLLCAPR.

The protein belongs to the cyclin family. Cyclin AB subfamily.

Its function is as follows. Essential for the control of the cell cycle at the G2/M (mitosis) transition. The polypeptide is G2/mitotic-specific cyclin-1 (CYC1) (Trypanosoma brucei brucei).